The primary structure comprises 218 residues: Small ribosomal subunit protein uS3c (218 aa).

A KH type-2 domain is found at 47 to 118; that stretch reads VQKNIRISSG…KLNIAITRIS (72 aa).

It belongs to the universal ribosomal protein uS3 family. In terms of assembly, part of the 30S ribosomal subunit.

The protein resides in the plastid. It is found in the chloroplast. This Nasturtium officinale (Watercress) protein is Small ribosomal subunit protein uS3c (rps3).